The primary structure comprises 1391 residues: DNA-directed RNA polymerase subunit beta' (1391 aa).

Zn(2+) contacts are provided by cysteine 72, cysteine 74, cysteine 87, and cysteine 90. Residues aspartate 462, aspartate 464, and aspartate 466 each contribute to the Mg(2+) site. The Zn(2+) site is built by cysteine 816, cysteine 890, cysteine 897, and cysteine 900.

It belongs to the RNA polymerase beta' chain family. The RNAP catalytic core consists of 2 alpha, 1 beta, 1 beta' and 1 omega subunit. When a sigma factor is associated with the core the holoenzyme is formed, which can initiate transcription. The cofactor is Mg(2+). It depends on Zn(2+) as a cofactor.

It catalyses the reaction RNA(n) + a ribonucleoside 5'-triphosphate = RNA(n+1) + diphosphate. In terms of biological role, DNA-dependent RNA polymerase catalyzes the transcription of DNA into RNA using the four ribonucleoside triphosphates as substrates. The protein is DNA-directed RNA polymerase subunit beta' of Neisseria meningitidis serogroup B (strain ATCC BAA-335 / MC58).